The following is an 867-amino-acid chain: Bifunctional diterpene synthase, chloroplastic (867 aa).

Residues M1 to C55 constitute a chloroplast transit peptide. Substrate is bound at residue K255. Positions 389 and 391 each coordinate Mg(2+). The DXDD motif motif lies at D389–D392. K474 serves as a coordination point for substrate. Positions 611, 615, 758, 762, and 766 each coordinate Mg(2+). Residues D611–D615 carry the DDXXD motif motif.

This sequence belongs to the terpene synthase family. It depends on Mg(2+) as a cofactor.

The protein resides in the plastid. It localises to the chloroplast. The catalysed reaction is (+)-copalyl diphosphate = miltiradiene + diphosphate. The enzyme catalyses (2E,6E,10E)-geranylgeranyl diphosphate = (+)-copalyl diphosphate. It participates in secondary metabolite biosynthesis; terpenoid biosynthesis. In terms of biological role, bifunctional diterpene cyclase that catalyzes the successive two-step type-B (protonation-initiated cyclization) and type-A (ionization-initiated cyclization) reactions of geranylgeranyl diphosphate (GGDP) producing successively (+)-copalyl diphosphate and miltiradiene. This Selaginella moellendorffii (Spikemoss) protein is Bifunctional diterpene synthase, chloroplastic (MDS).